A 952-amino-acid polypeptide reads, in one-letter code: Protein translocase subunit SecA (952 aa).

Residues Gln135, 153–157 (GEGKT), and Asp575 contribute to the ATP site. Residues 916 to 930 (VSAKAATQPAAPAAK) are compositionally biased toward low complexity. A disordered region spans residues 916–952 (VSAKAATQPAAPAAKEVGRNDPCPCGSGKKYKKCCGK). Residues Cys938, Cys940, Cys949, and Cys950 each contribute to the Zn(2+) site.

Belongs to the SecA family. In terms of assembly, monomer and homodimer. Part of the essential Sec protein translocation apparatus which comprises SecA, SecYEG and auxiliary proteins SecDF. Other proteins may also be involved. Zn(2+) serves as cofactor.

Its subcellular location is the cell membrane. The protein resides in the cytoplasm. The enzyme catalyses ATP + H2O + cellular proteinSide 1 = ADP + phosphate + cellular proteinSide 2.. Its function is as follows. Part of the Sec protein translocase complex. Interacts with the SecYEG preprotein conducting channel. Has a central role in coupling the hydrolysis of ATP to the transfer of proteins into and across the cell membrane, serving as an ATP-driven molecular motor driving the stepwise translocation of polypeptide chains across the membrane. This Dehalococcoides mccartyi (strain ATCC BAA-2266 / KCTC 15142 / 195) (Dehalococcoides ethenogenes (strain 195)) protein is Protein translocase subunit SecA.